A 346-amino-acid polypeptide reads, in one-letter code: Probable electron transfer flavoprotein subunit alpha, mitochondrial (346 aa).

285–313 (LYVAIGISGAIQHLAGMKESKMIIAINKD) serves as a coordination point for FAD.

This sequence belongs to the ETF alpha-subunit/FixB family. As to quaternary structure, heterodimer of an alpha and a beta subunit. Requires FAD as cofactor.

It localises to the mitochondrion matrix. In terms of biological role, the electron transfer flavoprotein serves as a specific electron acceptor for several dehydrogenases, including five acyl-CoA dehydrogenases, glutaryl-CoA and sarcosine dehydrogenase. It transfers the electrons to the main mitochondrial respiratory chain via ETF-ubiquinone oxidoreductase (ETF dehydrogenase). The polypeptide is Probable electron transfer flavoprotein subunit alpha, mitochondrial (ETF1) (Cryptococcus neoformans var. neoformans serotype D (strain B-3501A) (Filobasidiella neoformans)).